A 177-amino-acid chain; its full sequence is ATP synthase subunit delta (177 aa).

The protein belongs to the ATPase delta chain family. F-type ATPases have 2 components, F(1) - the catalytic core - and F(0) - the membrane proton channel. F(1) has five subunits: alpha(3), beta(3), gamma(1), delta(1), epsilon(1). F(0) has three main subunits: a(1), b(2) and c(10-14). The alpha and beta chains form an alternating ring which encloses part of the gamma chain. F(1) is attached to F(0) by a central stalk formed by the gamma and epsilon chains, while a peripheral stalk is formed by the delta and b chains.

It is found in the cell inner membrane. Functionally, f(1)F(0) ATP synthase produces ATP from ADP in the presence of a proton or sodium gradient. F-type ATPases consist of two structural domains, F(1) containing the extramembraneous catalytic core and F(0) containing the membrane proton channel, linked together by a central stalk and a peripheral stalk. During catalysis, ATP synthesis in the catalytic domain of F(1) is coupled via a rotary mechanism of the central stalk subunits to proton translocation. Its function is as follows. This protein is part of the stalk that links CF(0) to CF(1). It either transmits conformational changes from CF(0) to CF(1) or is implicated in proton conduction. This chain is ATP synthase subunit delta, found in Neisseria meningitidis serogroup B (strain ATCC BAA-335 / MC58).